The chain runs to 360 residues: Aminomethyltransferase (360 aa).

Belongs to the GcvT family. The glycine cleavage system is composed of four proteins: P, T, L and H.

It carries out the reaction N(6)-[(R)-S(8)-aminomethyldihydrolipoyl]-L-lysyl-[protein] + (6S)-5,6,7,8-tetrahydrofolate = N(6)-[(R)-dihydrolipoyl]-L-lysyl-[protein] + (6R)-5,10-methylene-5,6,7,8-tetrahydrofolate + NH4(+). Functionally, the glycine cleavage system catalyzes the degradation of glycine. This is Aminomethyltransferase from Methylococcus capsulatus (strain ATCC 33009 / NCIMB 11132 / Bath).